The following is a 246-amino-acid chain: tRNA pseudouridine synthase A (246 aa).

Catalysis depends on Asp-52, which acts as the Nucleophile. Residue Tyr-111 participates in substrate binding.

It belongs to the tRNA pseudouridine synthase TruA family. Homodimer.

It carries out the reaction uridine(38/39/40) in tRNA = pseudouridine(38/39/40) in tRNA. Formation of pseudouridine at positions 38, 39 and 40 in the anticodon stem and loop of transfer RNAs. This Ehrlichia ruminantium (strain Gardel) protein is tRNA pseudouridine synthase A.